The chain runs to 339 residues: uncharacterized protein (339 aa).

NADP(+)-binding residues include Ile-54, Lys-78, Asp-101, Asn-128, Tyr-213, and Lys-217. Residue Tyr-213 is the Proton donor of the active site. Catalysis depends on Lys-217, which acts as the Lowers pKa of active site Tyr.

The protein belongs to the short-chain dehydrogenases/reductases (SDR) family.

This is an uncharacterized protein from Schizosaccharomyces pombe (strain 972 / ATCC 24843) (Fission yeast).